We begin with the raw amino-acid sequence, 384 residues long: Probable beta-1,3-galactosyltransferase 1 (384 aa).

The chain crosses the membrane as a helical; Signal-anchor for type II membrane protein span at residues 21-43 (SVFFMCLASFCLGMFFTNRMWNI). N-linked (GlcNAc...) asparagine glycans are attached at residues Asn73 and Asn105.

It belongs to the glycosyltransferase 31 family. Mn(2+) is required as a cofactor.

Its subcellular location is the golgi apparatus membrane. It functions in the pathway protein modification; protein glycosylation. Functionally, beta-1,3-galactosyltransferase that transfers galactose from UDP-galactose to substrates with a terminal glycosyl residue. This is Probable beta-1,3-galactosyltransferase 1 (B3GALT1) from Arabidopsis thaliana (Mouse-ear cress).